Reading from the N-terminus, the 151-residue chain is Methylated-DNA--protein-cysteine methyltransferase (151 aa).

The active-site Nucleophile; methyl group acceptor is Cys-119.

The protein belongs to the MGMT family.

Its subcellular location is the cytoplasm. The catalysed reaction is a 6-O-methyl-2'-deoxyguanosine in DNA + L-cysteinyl-[protein] = S-methyl-L-cysteinyl-[protein] + a 2'-deoxyguanosine in DNA. It carries out the reaction a 4-O-methyl-thymidine in DNA + L-cysteinyl-[protein] = a thymidine in DNA + S-methyl-L-cysteinyl-[protein]. Functionally, involved in the cellular defense against the biological effects of O6-methylguanine (O6-MeG) and O4-methylthymine (O4-MeT) in DNA. Repairs the methylated nucleobase in DNA by stoichiometrically transferring the methyl group to a cysteine residue in the enzyme. This is a suicide reaction: the enzyme is irreversibly inactivated. This Saccharolobus islandicus (strain L.S.2.15 / Lassen #1) (Sulfolobus islandicus) protein is Methylated-DNA--protein-cysteine methyltransferase.